The chain runs to 525 residues: MANAPVSPVVLVILDGWGYRQEANANAIAAANTPNVDAFFATYPSTLIHTSGKRVGLPDGQMGNSEVGHLNLGAGRVVPQELVRISDAIEDGSFLRNDVLVKVCRETRQAGKKLHLIGLCSDGGVHSHLNHLLGLLDLAKVNGIADVHIHAITDGRDTNTTEGINYLQQIQAHIDKFGVGSISTISGRYFAMDRDRRWDRVKQAYDVMTQNGNLDQRSFAEILQSHYDNGVTDEFIPPVRLKEGAIEPGDGVIFYNFRPDRARQLSYALVDKNFQGFERELIPDLNFVTFTQYDANLPVQVAFAPQNLTKILGEVIADNGLKQFRTAETEKYPHVTYFFNGGLEVAFEGEDRELISSPQVATYDQKPEMSAKAVTDAACQAIEKGIYSLVVINYANPDMVGHTGKLEAAVQAIETVDHCLGRLVATIGKMGGTTLITADHGNAEYMADQNGKSWTAHTTNPVPFILIEGERRKVVGHGADVVLRENGCLADVAPTILDILGIDKPQEMTGQSLIAPAPYAVTRRR.

Residues D15 and S65 each contribute to the Mn(2+) site. Residue S65 is the Phosphoserine intermediate of the active site. Residues H126, 156–157 (RD), R188, R194, 258–261 (RPDR), and K331 contribute to the substrate site. D398, H402, D439, H440, and H457 together coordinate Mn(2+).

It belongs to the BPG-independent phosphoglycerate mutase family. As to quaternary structure, monomer. It depends on Mn(2+) as a cofactor.

The catalysed reaction is (2R)-2-phosphoglycerate = (2R)-3-phosphoglycerate. Its pathway is carbohydrate degradation; glycolysis; pyruvate from D-glyceraldehyde 3-phosphate: step 3/5. Catalyzes the interconversion of 2-phosphoglycerate and 3-phosphoglycerate. The chain is 2,3-bisphosphoglycerate-independent phosphoglycerate mutase from Picosynechococcus sp. (strain ATCC 27264 / PCC 7002 / PR-6) (Agmenellum quadruplicatum).